Consider the following 458-residue polypeptide: tRNA modification GTPase MnmE (458 aa).

Positions 22, 85, and 124 each coordinate (6S)-5-formyl-5,6,7,8-tetrahydrofolate. The TrmE-type G domain occupies 220 to 379 (GLATAIIGRP…LEEAISRLFF (160 aa)). N230 is a binding site for K(+). GTP-binding positions include 230–235 (NVGKSS), 249–255 (TDIPGTT), and 274–277 (DTAG). Position 234 (S234) interacts with Mg(2+). T249, I251, and T254 together coordinate K(+). T255 lines the Mg(2+) pocket. K458 provides a ligand contact to (6S)-5-formyl-5,6,7,8-tetrahydrofolate.

The protein belongs to the TRAFAC class TrmE-Era-EngA-EngB-Septin-like GTPase superfamily. TrmE GTPase family. In terms of assembly, homodimer. Heterotetramer of two MnmE and two MnmG subunits. K(+) serves as cofactor.

The protein localises to the cytoplasm. Exhibits a very high intrinsic GTPase hydrolysis rate. Involved in the addition of a carboxymethylaminomethyl (cmnm) group at the wobble position (U34) of certain tRNAs, forming tRNA-cmnm(5)s(2)U34. This Shouchella clausii (strain KSM-K16) (Alkalihalobacillus clausii) protein is tRNA modification GTPase MnmE.